A 224-amino-acid chain; its full sequence is Ribonuclease HII (224 aa).

The region spanning 21 to 223 (RAIAGIDEAG…IRNAALEGEQ (203 aa)) is the RNase H type-2 domain. A divalent metal cation contacts are provided by D27, E28, and D124.

The protein belongs to the RNase HII family. The cofactor is Mn(2+). Mg(2+) is required as a cofactor.

It localises to the cytoplasm. The enzyme catalyses Endonucleolytic cleavage to 5'-phosphomonoester.. In terms of biological role, endonuclease that specifically degrades the RNA of RNA-DNA hybrids. The sequence is that of Ribonuclease HII from Roseiflexus castenholzii (strain DSM 13941 / HLO8).